The following is a 304-amino-acid chain: HTH-type transcriptional activator CmpR (304 aa).

The region spanning 1-61 is the HTH lysR-type domain; sequence MKNATLHQFE…EQIGRKIYLT (61 aa). Residues 21–40 constitute a DNA-binding region (H-T-H motif); the sequence is FTKAAEELFLTQPTVSQQMK.

It belongs to the LysR transcriptional regulatory family.

The protein resides in the cytoplasm. Activates transcription of the cmpABCD operon under carbon dioxide-limited conditions. Specifically binds to the cmpR-cmpA intergenic region. This chain is HTH-type transcriptional activator CmpR (cmpR), found in Synechocystis sp. (strain ATCC 27184 / PCC 6803 / Kazusa).